Here is a 411-residue protein sequence, read N- to C-terminus: ATPase GET3B (411 aa).

A chloroplast-targeting transit peptide spans 1 to 67 (MATLSSYLLS…RRRNSLQVKS (67 aa)). 95 to 102 (KGGVGKTS) is a binding site for ATP. The active site involves Asp-124. Position 348 (Asn-348) interacts with ATP.

Belongs to the arsA ATPase family.

The protein localises to the plastid. The protein resides in the chloroplast stroma. It catalyses the reaction ATP + H2O = ADP + phosphate + H(+). The polypeptide is ATPase GET3B (Arabidopsis thaliana (Mouse-ear cress)).